The following is a 77-amino-acid chain: Small ribosomal subunit protein bS18 (77 aa).

The protein belongs to the bacterial ribosomal protein bS18 family. Part of the 30S ribosomal subunit. Forms a tight heterodimer with protein bS6.

Its function is as follows. Binds as a heterodimer with protein bS6 to the central domain of the 16S rRNA, where it helps stabilize the platform of the 30S subunit. The sequence is that of Small ribosomal subunit protein bS18 from Shouchella clausii (strain KSM-K16) (Alkalihalobacillus clausii).